We begin with the raw amino-acid sequence, 318 residues long: MASLKIPANIPLPEEDSEQLHKAFKGWGTNEGMIISILAHRNATQRSFIRAVYAANYNKDLLKELDGELSGDFERVVMLWTLDPTERDAYLANESTKLFTKNIWVLVEIACTRPSLEFFKTKQAYHVRYKTSLEEDVAYHTSGNIRKLLVPLVSTFRYDGNADEVNVKLARSEAKTLHKKITEKAYTDEDLIRILTTRSKAQINATLNHFKDKFGSSINKFLKEDSNDDYVQLLKTAIKCLTYPEKYFEKVLRRAINRMGTDEWALTRVVTTRAEVDLERIKEEYLRRNSVPLDRAIANDTSGDYKDMLLALLGHDHA.

Ala-2 is subject to N-acetylalanine. 4 Annexin repeats span residues 11 to 82, 83 to 154, 168 to 239, and 243 to 314; these read PLPE…LWTL, DPTE…PLVS, KLAR…TAIK, and YPEK…ALLG. Ca(2+) contacts are provided by Phe-24, Gly-26, Gly-28, and Glu-68. Ser-95 is modified (phosphoserine). Thr-100 and Thr-112 each carry phosphothreonine. Tyr-129 carries the phosphotyrosine modification. Ca(2+) contacts are provided by Ile-256, Arg-258, and Gly-260. Phosphotyrosine is present on Tyr-285. Ser-290 bears the Phosphoserine mark. Ca(2+) contacts are provided by Asp-300 and Thr-301.

This sequence belongs to the annexin (TC 1.A.31.1) family. As to expression, expressed in flowers.

In Arabidopsis thaliana (Mouse-ear cress), this protein is Annexin D6 (ANN6).